The primary structure comprises 172 residues: 3-hydroxydecanoyl-[acyl-carrier-protein] dehydratase (172 aa).

The active site involves H71.

The protein belongs to the thioester dehydratase family. FabA subfamily. As to quaternary structure, homodimer.

It is found in the cytoplasm. The enzyme catalyses a (3R)-hydroxyacyl-[ACP] = a (2E)-enoyl-[ACP] + H2O. It catalyses the reaction (3R)-hydroxydecanoyl-[ACP] = (2E)-decenoyl-[ACP] + H2O. The catalysed reaction is (2E)-decenoyl-[ACP] = (3Z)-decenoyl-[ACP]. It functions in the pathway lipid metabolism; fatty acid biosynthesis. In terms of biological role, necessary for the introduction of cis unsaturation into fatty acids. Catalyzes the dehydration of (3R)-3-hydroxydecanoyl-ACP to E-(2)-decenoyl-ACP and then its isomerization to Z-(3)-decenoyl-ACP. Can catalyze the dehydratase reaction for beta-hydroxyacyl-ACPs with saturated chain lengths up to 16:0, being most active on intermediate chain length. The sequence is that of 3-hydroxydecanoyl-[acyl-carrier-protein] dehydratase from Maricaulis maris (strain MCS10) (Caulobacter maris).